Reading from the N-terminus, the 145-residue chain is ATP synthase epsilon chain (145 aa).

This sequence belongs to the ATPase epsilon chain family. F-type ATPases have 2 components, CF(1) - the catalytic core - and CF(0) - the membrane proton channel. CF(1) has five subunits: alpha(3), beta(3), gamma(1), delta(1), epsilon(1). CF(0) has three main subunits: a, b and c.

The protein resides in the cell inner membrane. Its function is as follows. Produces ATP from ADP in the presence of a proton gradient across the membrane. This chain is ATP synthase epsilon chain, found in Francisella tularensis subsp. holarctica (strain FTNF002-00 / FTA).